Here is a 362-residue protein sequence, read N- to C-terminus: Porin Omp2b (362 aa).

The N-terminal stretch at 1–22 (MNIKSLLLGSAAALVAASGAQA) is a signal peptide.

Belongs to the alphaproteobacteria porin family. In terms of assembly, homotrimer.

The protein localises to the cell outer membrane. Forms passive diffusion pores that allow small molecular weight hydrophilic materials across the outer membrane. This is Porin Omp2b (omp2b) from Brucella abortus (strain S19).